The sequence spans 124 residues: Large ribosomal subunit protein bL17 (124 aa).

Belongs to the bacterial ribosomal protein bL17 family. In terms of assembly, part of the 50S ribosomal subunit. Contacts protein L32.

This chain is Large ribosomal subunit protein bL17, found in Persephonella marina (strain DSM 14350 / EX-H1).